Reading from the N-terminus, the 916-residue chain is MNPVESFVFPDIPKTIRDVLFKPDKQMIIVGVIGKSSNPTCNKLIGFNLLTTHPALTDSKCCEGRIKFYFENDGNVLYLHFETTFDQQVMAEQLAKAIDTGVQDNFVNFNSYVRSRFARMLLFAIQVCHMIVLVEPTSVFDTSYLSIFKSLKIIREKYVLKFLPKLLKASNVGNYMGKEARLCSPRFIFLFEGTCDIKPEDVEKLEALECAVEEDIYKMLRTEFIITNNSAMSLFSIPRSKKFVFFSSDSKAKSDPLLDSIDMLMEYLDKPAAGQQGDKDEEEFMNKLRPCAGYGMSAWSVGAGAPKTERERSVLTLIKKHVAEAFEHGFDDSVSKYRGRSHFAVPGFKSWFEGFKFLHKIFIENPDNQNYEPVDVDYKAYLENFHKVIDIDERFFADVCEHGMELAMVNYKEMLPHHYSGTFHEKKYQQARELFLRYARGPEVEKHELKLKDYCDSIWLNGKQQCEYPSLRGNPCALGKHKANDPMDHSSGVVFVSACNCGRTQGHREDPYTIRQANYEFYQLIAKSCSNCTLLERIKFPVFEPSSSDFRAAEFINKNLSNLMSLENSNRTPDTGTHPPMTNDHSPHLSGSQKSQDSASNLTFSIDDKEENETHAKNYASQGDADEALEQENLNEIVIKVGEHADQTDKEKAILRQPSTTEYLPGMLHATSPIGLLPQFPSWSLVCLGPSSIYTHNSGLPEHIQSGFLSGSNFLLPWDVSVRLEHAQSWAASYEKIRNRKKNVSQSKSSDSSNNFTLKIFIGIEYECLRGHRFIMSGPDTVLRGGSGIVRDSGSKVVFNDMPIYFPCLCRNSNVAQLMRVHIVTPKAPVNVILEPKAKIFQNNMQSNFTFTTGQPEPIKLTQSAYWILRLPFVYEGDEGPLMPPSEVNASNAAMHGILLAGMYGIKESEISEELL.

Positions 566 to 626 (LENSNRTPDT…KNYASQGDAD (61 aa)) are disordered. Polar residues predominate over residues 589–604 (LSGSQKSQDSASNLTF).

It belongs to the SMG8 family.

In terms of biological role, involved in nonsense-mediated decay (NMD) of mRNAs containing premature stop codons. Probable component of kinase complex containing SMG1 and recruited to stalled ribosomes. The chain is Nonsense-mediated mRNA decay factor SMG8 from Aedes aegypti (Yellowfever mosquito).